Consider the following 938-residue polypeptide: Isoleucine--tRNA ligase (938 aa).

The 'HIGH' region signature appears at 58 to 68 (PYANGNIHIGH). Glu-562 is an L-isoleucyl-5'-AMP binding site. The short motif at 603-607 (KMSKS) is the 'KMSKS' region element. Position 606 (Lys-606) interacts with ATP. Residues Cys-901, Cys-904, Cys-921, and Cys-924 each contribute to the Zn(2+) site.

It belongs to the class-I aminoacyl-tRNA synthetase family. IleS type 1 subfamily. In terms of assembly, monomer. It depends on Zn(2+) as a cofactor.

The protein resides in the cytoplasm. It catalyses the reaction tRNA(Ile) + L-isoleucine + ATP = L-isoleucyl-tRNA(Ile) + AMP + diphosphate. Catalyzes the attachment of isoleucine to tRNA(Ile). As IleRS can inadvertently accommodate and process structurally similar amino acids such as valine, to avoid such errors it has two additional distinct tRNA(Ile)-dependent editing activities. One activity is designated as 'pretransfer' editing and involves the hydrolysis of activated Val-AMP. The other activity is designated 'posttransfer' editing and involves deacylation of mischarged Val-tRNA(Ile). This is Isoleucine--tRNA ligase from Actinobacillus pleuropneumoniae serotype 7 (strain AP76).